Here is a 220-residue protein sequence, read N- to C-terminus: NADH-quinone oxidoreductase subunit I (220 aa).

4Fe-4S ferredoxin-type domains follow at residues 71–102 and 112–141; these read LQRL…IITH and DSYT…MGNR. Residues Cys82, Cys85, Cys88, Cys92, Cys121, Cys124, Cys127, and Cys131 each contribute to the [4Fe-4S] cluster site. The segment at 187 to 220 is disordered; it reads MQATPLDYVQEPSKEESQEETPTNPESNKGDENV.

Belongs to the complex I 23 kDa subunit family. NDH-1 is composed of 14 different subunits. Subunits NuoA, H, J, K, L, M, N constitute the membrane sector of the complex. [4Fe-4S] cluster serves as cofactor.

It is found in the cell inner membrane. The enzyme catalyses a quinone + NADH + 5 H(+)(in) = a quinol + NAD(+) + 4 H(+)(out). Its function is as follows. NDH-1 shuttles electrons from NADH, via FMN and iron-sulfur (Fe-S) centers, to quinones in the respiratory chain. The immediate electron acceptor for the enzyme in this species is believed to be ubiquinone. Couples the redox reaction to proton translocation (for every two electrons transferred, four hydrogen ions are translocated across the cytoplasmic membrane), and thus conserves the redox energy in a proton gradient. The chain is NADH-quinone oxidoreductase subunit I from Helicobacter pylori (strain ATCC 700392 / 26695) (Campylobacter pylori).